A 364-amino-acid chain; its full sequence is UDP-N-acetylglucosamine--N-acetylmuramyl-(pentapeptide) pyrophosphoryl-undecaprenol N-acetylglucosamine transferase (364 aa).

UDP-N-acetyl-alpha-D-glucosamine-binding positions include 10–12 (TGG), N128, R170, S199, I250, and Q295.

It belongs to the glycosyltransferase 28 family. MurG subfamily.

The protein resides in the cell inner membrane. It carries out the reaction di-trans,octa-cis-undecaprenyl diphospho-N-acetyl-alpha-D-muramoyl-L-alanyl-D-glutamyl-meso-2,6-diaminopimeloyl-D-alanyl-D-alanine + UDP-N-acetyl-alpha-D-glucosamine = di-trans,octa-cis-undecaprenyl diphospho-[N-acetyl-alpha-D-glucosaminyl-(1-&gt;4)]-N-acetyl-alpha-D-muramoyl-L-alanyl-D-glutamyl-meso-2,6-diaminopimeloyl-D-alanyl-D-alanine + UDP + H(+). It participates in cell wall biogenesis; peptidoglycan biosynthesis. In terms of biological role, cell wall formation. Catalyzes the transfer of a GlcNAc subunit on undecaprenyl-pyrophosphoryl-MurNAc-pentapeptide (lipid intermediate I) to form undecaprenyl-pyrophosphoryl-MurNAc-(pentapeptide)GlcNAc (lipid intermediate II). The polypeptide is UDP-N-acetylglucosamine--N-acetylmuramyl-(pentapeptide) pyrophosphoryl-undecaprenol N-acetylglucosamine transferase (Chlorobaculum parvum (strain DSM 263 / NCIMB 8327) (Chlorobium vibrioforme subsp. thiosulfatophilum)).